Here is a 738-residue protein sequence, read N- to C-terminus: Protostadienol synthase A (738 aa).

The PFTB 1 repeat unit spans residues 132-173 (KQEMCRYLLNVVNEDGGWGLFIQSPSTVFGTVMNYCMLRILG). Asp-463 (proton donor) is an active-site residue. PFTB repeat units follow at residues 490 to 531 (LQQA…YENV), 567 to 607 (VSRS…ACMG), and 616 to 663 (CQRA…AVIG).

The protein belongs to the terpene cyclase/mutase family.

It catalyses the reaction (S)-2,3-epoxysqualene = (17Z)-protosta-17(20),24-dien-3beta-ol. Its function is as follows. Protostadienol synthase which cyclizes (3S)-oxidosqualene to (17Z)-protosta-17(20),24-dien-3-beta-ol (protostadienol), the biosynthetic precursor of helvolic acid, a secondary metabolite which promotes virulence. The polypeptide is Protostadienol synthase A (pdsA) (Neosartorya fischeri (strain ATCC 1020 / DSM 3700 / CBS 544.65 / FGSC A1164 / JCM 1740 / NRRL 181 / WB 181) (Aspergillus fischerianus)).